The primary structure comprises 447 residues: Argininosuccinate synthase (447 aa).

ATP is bound by residues 17-25 (AFSGGLDTS) and Ala-43. Tyr-99 lines the L-citrulline pocket. ATP is bound by residues Gly-129 and Thr-131. Thr-131, Asn-135, and Asp-136 together coordinate L-aspartate. Asn-135 is a binding site for L-citrulline. Residue Asp-136 participates in ATP binding. L-citrulline contacts are provided by Arg-139 and Ser-192. Asp-194 contributes to the ATP binding site. The L-citrulline site is built by Thr-201, Glu-203, and Glu-280.

It belongs to the argininosuccinate synthase family. Type 2 subfamily. As to quaternary structure, homotetramer.

The protein resides in the cytoplasm. It catalyses the reaction L-citrulline + L-aspartate + ATP = 2-(N(omega)-L-arginino)succinate + AMP + diphosphate + H(+). The protein operates within amino-acid biosynthesis; L-arginine biosynthesis; L-arginine from L-ornithine and carbamoyl phosphate: step 2/3. The chain is Argininosuccinate synthase from Janthinobacterium sp. (strain Marseille) (Minibacterium massiliensis).